Here is a 179-residue protein sequence, read N- to C-terminus: Alpha-S2-casein-like A (179 aa).

The first 15 residues, 1 to 15 (MKFFIFTCLVAAALA), serve as a signal peptide directing secretion. Phosphoserine is present on residues S24 and S25. Residues 44–121 (FQTPQDSASS…NAIYDVPSQE (78 aa)) form a disordered region. The segment covering 63–74 (ISEKIEQSEEQK) has biased composition (basic and acidic residues). Over residues 93-110 (PQICTPYQQQSSVNQRPQ) the composition is skewed to polar residues.

This sequence belongs to the alpha-casein family. Mammary gland specific. Secreted in milk.

It localises to the secreted. Functionally, important role in the capacity of milk to transport calcium phosphate. The chain is Alpha-S2-casein-like A (Csn1s2a) from Rattus norvegicus (Rat).